The sequence spans 193 residues: Outer membrane lipoprotein DolP (193 aa).

Positions 1-21 (MTLSPLKKLAILLGATIFLQG) are cleaved as a signal peptide. A lipid anchor (N-palmitoyl cysteine) is attached at Cys22. Cys22 carries the S-diacylglycerol cysteine lipid modification. BON domains lie at 48-117 (DDET…TVSP) and 126-193 (KDSW…KYLD).

Belongs to the lipoprotein DolP family.

The protein localises to the cell outer membrane. Functionally, plays an important role in maintaining outer membrane integrity. In Haemophilus influenzae (strain ATCC 51907 / DSM 11121 / KW20 / Rd), this protein is Outer membrane lipoprotein DolP.